A 150-amino-acid polypeptide reads, in one-letter code: Transcriptional repressor NrdR (150 aa).

Residues 3–34 (CPFCHHPQSRVIDSRTVENGFVTRRRRQCTKC) fold into a zinc finger. The ATP-cone domain maps to 46–136 (LLVEKRNGVT…VYKSFSSMED (91 aa)).

It belongs to the NrdR family. It depends on Zn(2+) as a cofactor.

Functionally, negatively regulates transcription of bacterial ribonucleotide reductase nrd genes and operons by binding to NrdR-boxes. This chain is Transcriptional repressor NrdR, found in Corynebacterium kroppenstedtii (strain DSM 44385 / JCM 11950 / CIP 105744 / CCUG 35717).